The chain runs to 449 residues: Xylose isomerase (449 aa).

Residues H101 and D104 contribute to the active site. 7 residues coordinate Mg(2+): E232, E268, H271, D296, D307, D309, and D340.

The protein belongs to the xylose isomerase family. In terms of assembly, homotetramer. Mg(2+) serves as cofactor.

Its subcellular location is the cytoplasm. It carries out the reaction alpha-D-xylose = alpha-D-xylulofuranose. The chain is Xylose isomerase from Bifidobacterium longum (strain NCC 2705).